A 289-amino-acid chain; its full sequence is MASLKDVKIKIAGVRKTKQITKAMNMVASAKLRGAQIKIEHFRPYAEKFQDVISNLATRSDETVHKLLEKRTNGTSCIFILITSDRGLCGIFNTMLIIKALELAKQKTTKGKKVSFICIGRKGRDAIKKTHYPILSDYSDKFTRDYQLASHISEKVIDGYLTVNMDEVVLIYGQFINAMRQIVGFSTLLPIHPKPLDKEQLEKYSEYIYEPGVAILLSELLPKFVTTQIYRGFLDTDASENAARMTAMDNATRNCDELIGNLTRLYNKTRQASITSELIDIVSGAEALK.

It belongs to the ATPase gamma chain family. As to quaternary structure, F-type ATPases have 2 components, CF(1) - the catalytic core - and CF(0) - the membrane proton channel. CF(1) has five subunits: alpha(3), beta(3), gamma(1), delta(1), epsilon(1). CF(0) has three main subunits: a, b and c.

It localises to the cell membrane. Its function is as follows. Produces ATP from ADP in the presence of a proton gradient across the membrane. The gamma chain is believed to be important in regulating ATPase activity and the flow of protons through the CF(0) complex. The polypeptide is ATP synthase gamma chain (Lawsonia intracellularis (strain PHE/MN1-00)).